We begin with the raw amino-acid sequence, 475 residues long: MVDVASKTGIISQIIGPVVDVEFSSGDLPKVYNAIVIDAGDKKVTCEVQQLLGNNKVRAVSMTSTDGLKRGASVLDTGSPITVPVGVPTLGRIFNVLGEPVDELGPCNAESGLPIHRPAPSFTELETKPSVFETGIKVVDLLAPYKRGGKIGLFGGAGVGKTVLIMELINNIAKAHGGVSVFGGVGERTREGNDLYAEMKESKVIDEDKLENSKVALVYGQMNEPPGARMRVGLTALTMAEYFRDVNKQDVLLFIDHIFRFVQAGSEVSALLGSMPSAVGYQPTLATEMGVLQERITSTNEGSITSIQAVYVPADDLTDPAPATTFAHLDATTVLSRGLASKGIYPAVDPLDSTSTMLQPEIVGTEHYATAQRIKETLQRYKELQDIIAILGLDELSEDDRLTVSRARKVERFLSQPFFVAEVFTGSPGKYVSLNDSIDGFNRLLNGEFDDLPEQSFYLVGDINEAIAKAAKLKG.

155–162 (GGAGVGKT) provides a ligand contact to ATP.

Belongs to the ATPase alpha/beta chains family. F-type ATPases have 2 components, CF(1) - the catalytic core - and CF(0) - the membrane proton channel. CF(1) has five subunits: alpha(3), beta(3), gamma(1), delta(1), epsilon(1). CF(0) has four main subunits: a(1), b(1), b'(1) and c(9-12).

The protein resides in the plastid. It localises to the chloroplast thylakoid membrane. It carries out the reaction ATP + H2O + 4 H(+)(in) = ADP + phosphate + 5 H(+)(out). In terms of biological role, produces ATP from ADP in the presence of a proton gradient across the membrane. The catalytic sites are hosted primarily by the beta subunits. This Ochrosphaera neapolitana protein is ATP synthase subunit beta, chloroplastic.